The following is a 75-amino-acid chain: Exodeoxyribonuclease 7 small subunit (75 aa).

The protein belongs to the XseB family. Heterooligomer composed of large and small subunits.

It localises to the cytoplasm. It catalyses the reaction Exonucleolytic cleavage in either 5'- to 3'- or 3'- to 5'-direction to yield nucleoside 5'-phosphates.. Its function is as follows. Bidirectionally degrades single-stranded DNA into large acid-insoluble oligonucleotides, which are then degraded further into small acid-soluble oligonucleotides. In Listeria innocua serovar 6a (strain ATCC BAA-680 / CLIP 11262), this protein is Exodeoxyribonuclease 7 small subunit.